The primary structure comprises 185 residues: Ribosome maturation factor RimM (185 aa).

Residues 106 to 185 form the PRC barrel domain; that stretch reads SGEYYWKDLL…IIEVDWDPGF (80 aa).

It belongs to the RimM family. Binds ribosomal protein uS19.

The protein resides in the cytoplasm. Functionally, an accessory protein needed during the final step in the assembly of 30S ribosomal subunit, possibly for assembly of the head region. Essential for efficient processing of 16S rRNA. May be needed both before and after RbfA during the maturation of 16S rRNA. It has affinity for free ribosomal 30S subunits but not for 70S ribosomes. The chain is Ribosome maturation factor RimM from Sodalis glossinidius (strain morsitans).